The primary structure comprises 161 residues: Glycine cleavage system H protein 3 (161 aa).

The Lipoyl-binding domain maps to 40 to 122; it reads TVTLGLTDVG…YGDAWIVKIK (83 aa). K81 is subject to N6-lipoyllysine.

The protein belongs to the GcvH family. As to quaternary structure, the glycine cleavage system is composed of four proteins: P, T, L and H. Requires (R)-lipoate as cofactor.

Its function is as follows. The glycine cleavage system catalyzes the degradation of glycine. The H protein shuttles the methylamine group of glycine from the P protein to the T protein. This Aquifex aeolicus (strain VF5) protein is Glycine cleavage system H protein 3.